A 273-amino-acid chain; its full sequence is Tetraspanin-8 (273 aa).

Residues 1–7 (MARCSNN) lie on the Cytoplasmic side of the membrane. The helical transmembrane segment at 8–28 (LVGILNFLVFLLSIPILAGGI) threads the bilayer. At 29-45 (WLSQKGSTECERFLDKP) the chain is on the extracellular side. The helical transmembrane segment at 46 to 66 (VIALGVFLMVVAIAGLIGSCC) threads the bilayer. Topologically, residues 67–75 (RVTWLLWVY) are cytoplasmic. The helical transmembrane segment at 76–96 (LFVMFLLILLVFCITVFAFVV) threads the bilayer. Residues 97–235 (TNKGAGEAIE…NVKSAWKKVA (139 aa)) lie on the Extracellular side of the membrane. Residue Asn192 is glycosylated (N-linked (GlcNAc...) asparagine). The chain crosses the membrane as a helical span at residues 236–256 (IVNIVFLVFLIIVYSVGCCAF). Topologically, residues 257-273 (RNNKRDDSYSRTYGYKP) are cytoplasmic.

This sequence belongs to the tetraspanin (TM4SF) family.

It localises to the membrane. Its function is as follows. May be involved in the regulation of cell differentiation. The sequence is that of Tetraspanin-8 (TET8) from Arabidopsis thaliana (Mouse-ear cress).